We begin with the raw amino-acid sequence, 205 residues long: Glycerol-3-phosphate acyltransferase (205 aa).

6 consecutive transmembrane segments (helical) span residues 5-25 (LALG…GYLA), 54-74 (GPAA…VWLA), 87-107 (IVLG…WLAF), 117-137 (VGLL…VWGV), 138-158 (CFAV…ATPL), and 162-182 (LWRA…YIVW).

It belongs to the PlsY family. In terms of assembly, probably interacts with PlsX.

Its subcellular location is the cell inner membrane. The catalysed reaction is an acyl phosphate + sn-glycerol 3-phosphate = a 1-acyl-sn-glycero-3-phosphate + phosphate. It participates in lipid metabolism; phospholipid metabolism. Functionally, catalyzes the transfer of an acyl group from acyl-phosphate (acyl-PO(4)) to glycerol-3-phosphate (G3P) to form lysophosphatidic acid (LPA). This enzyme utilizes acyl-phosphate as fatty acyl donor, but not acyl-CoA or acyl-ACP. This Gloeobacter violaceus (strain ATCC 29082 / PCC 7421) protein is Glycerol-3-phosphate acyltransferase.